The sequence spans 488 residues: N-succinylglutamate 5-semialdehyde dehydrogenase (488 aa).

Position 221 to 226 (221 to 226) interacts with NAD(+); it reads GSSRTG. Residues Glu-244 and Cys-278 contribute to the active site.

Belongs to the aldehyde dehydrogenase family. AstD subfamily.

The enzyme catalyses N-succinyl-L-glutamate 5-semialdehyde + NAD(+) + H2O = N-succinyl-L-glutamate + NADH + 2 H(+). It functions in the pathway amino-acid degradation; L-arginine degradation via AST pathway; L-glutamate and succinate from L-arginine: step 4/5. Functionally, catalyzes the NAD-dependent reduction of succinylglutamate semialdehyde into succinylglutamate. This is N-succinylglutamate 5-semialdehyde dehydrogenase from Pseudomonas savastanoi pv. phaseolicola (strain 1448A / Race 6) (Pseudomonas syringae pv. phaseolicola (strain 1448A / Race 6)).